The sequence spans 251 residues: Triosephosphate isomerase (251 aa).

9 to 11 (NWK) provides a ligand contact to substrate. His95 (electrophile) is an active-site residue. Glu167 (proton acceptor) is an active-site residue. Substrate-binding positions include Gly173, Ser213, and 234–235 (GG). Ser213 carries the post-translational modification Phosphoserine.

This sequence belongs to the triosephosphate isomerase family. Homodimer.

It is found in the cytoplasm. The catalysed reaction is D-glyceraldehyde 3-phosphate = dihydroxyacetone phosphate. It participates in carbohydrate biosynthesis; gluconeogenesis. The protein operates within carbohydrate degradation; glycolysis; D-glyceraldehyde 3-phosphate from glycerone phosphate: step 1/1. Involved in the gluconeogenesis. Catalyzes stereospecifically the conversion of dihydroxyacetone phosphate (DHAP) to D-glyceraldehyde-3-phosphate (G3P). This chain is Triosephosphate isomerase, found in Bacillus cytotoxicus (strain DSM 22905 / CIP 110041 / 391-98 / NVH 391-98).